Consider the following 586-residue polypeptide: Madf and zinc finger protein 1 (586 aa).

The tract at residues 161–194 (FMSEDDLAPPRKPGRPPRRTRPGQVFKFKVSFIR) is involved in interaction with Cp190. A DNA-binding region (MADF 1) is located at residues 201–292 (HLIQAYKEHP…KCEFLSVAPV (92 aa)). Positions 294 to 319 (TPRENEEDNDLTAIKLNFKEENLITT) are involved in interaction with Cp190. Residues 320-413 (SFIETYANYP…MCSFLPAKGS (94 aa)) constitute a DNA-binding region (MADF 2). 6 consecutive C2H2-type zinc fingers follow at residues 418 to 441 (LYCDYCDKRFHGDYNLRVHIVKAH), 448 to 471 (YLCSFCPRRFDRHVDMDRHKLRSH), 476 to 498 (LKCQYCEKSFAVDTDLKVHTLIH), 504 to 527 (HVCDICGKTFRLKLLLDHHVNGVH), 533 to 555 (YSCNMCTKTFRKKFELANHIKGH), and 561 to 583 (KKCEYCDATFYDHSSLSRHRRSH).

Interacts (via regions flanking MADF domain 1) with Cp190 (via regions between the BTB domain and first zinc finger domain); the interaction is probably direct and is essential for protein function.

It localises to the nucleus. The protein resides in the chromosome. It is found in the nucleoplasm. Functionally, chromatin-binding protein involved in the organization of active promoters and insulators. Essential for the activity of heterochromatin promoters; primarily binds to specific motifs within promoters of housekeeping genes. May also associate to a lesser extent with promoters in euchromatin. Mediates recruitment of Cp190, a multifunctional protein involved in the recruitment of transcription complexes, the creation of open chromatin regions and the activity of insulators. Cooperates with pita and su(Hw) to recruit Cp190 and regulate insulator function at the front-ultraabdominal (Fub) boundary. May cooperate with other C2H2 zinc finger proteins, such as M1BP, to recruit CP190 to promoters. May be involved in cellular organization and development of the eye. This is Madf and zinc finger protein 1 from Drosophila melanogaster (Fruit fly).